The primary structure comprises 345 residues: Nuclear egress protein 1 (345 aa).

The CCCH-type zinc-finger motif lies at Cys115 to His247.

The protein belongs to the herpesviridae NEC1 protein family. Forms a heterohexameric complex with NEC2. Interacts with capsid vertex specific component 2/CVC2; this interaction directs the capsid to the host inner nuclear membrane to initiate budding. Phosphorylated at serine residues in the N-terminus. This phosphorylation regulates the localization within the inner nuclear membrane.

The protein localises to the host nucleus inner membrane. Its function is as follows. Plays an essential role in virion nuclear egress, the first step of virion release from infected cell. Within the host nucleus, NEC1 interacts with the newly formed capsid through the vertexes and directs it to the inner nuclear membrane by associating with NEC2. Induces the budding of the capsid at the inner nuclear membrane as well as its envelopment into the perinuclear space. There, the NEC1/NEC2 complex promotes the fusion of the enveloped capsid with the outer nuclear membrane and the subsequent release of the viral capsid into the cytoplasm where it will reach the secondary budding sites in the host Golgi or trans-Golgi network. The protein is Nuclear egress protein 1 of Psittacid herpesvirus 1 (isolate Amazon parrot/-/97-0001/1997) (PsHV-1).